The sequence spans 158 residues: Snaclec alboaggregin-D subunit alpha (158 aa).

Residues 1-23 (MGRFIFGSFGLLVVFLSLSGTGA) form the signal peptide. Disulfide bonds link cysteine 27–cysteine 38, cysteine 55–cysteine 152, and cysteine 127–cysteine 144. The C-type lectin domain occupies 34 to 153 (YDRYCYQAFS…CAELNPFICK (120 aa)).

Belongs to the snaclec family. In terms of assembly, tetramer of heterodimers of alpha and beta subunits (alphabeta)(4); disulfide-linked. As to expression, expressed by the venom gland.

It localises to the secreted. In terms of biological role, snaclec that induces human platelet aggregation in the absence of any cofactor with the EC(50) of 0.25 nM and causes tyrosine phosphorylation in human platelets. Antibodies against either platelet GPIbalpha (GP1BA) or GPVI (GP6) inhibit alboaggregin D-induced platelet aggregation. Only the combination of these two antibodies completely inhibit aggregation, suggesting that it acts through both GPIbalpha (GP1BA) and GPVI (GP6). The polypeptide is Snaclec alboaggregin-D subunit alpha (Trimeresurus albolabris (White-lipped pit viper)).